Reading from the N-terminus, the 211-residue chain is Large ribosomal subunit protein uL3 (211 aa).

This sequence belongs to the universal ribosomal protein uL3 family. Part of the 50S ribosomal subunit. Forms a cluster with proteins L14 and L19.

Functionally, one of the primary rRNA binding proteins, it binds directly near the 3'-end of the 23S rRNA, where it nucleates assembly of the 50S subunit. The sequence is that of Large ribosomal subunit protein uL3 from Trichlorobacter lovleyi (strain ATCC BAA-1151 / DSM 17278 / SZ) (Geobacter lovleyi).